Reading from the N-terminus, the 265-residue chain is Iron(3+)-hydroxamate import ATP-binding protein FhuC (265 aa).

One can recognise an ABC transporter domain in the interval 12–248 (FALRNISFRV…ETLEMIYGIP (237 aa)). ATP contacts are provided by residues 44–51 (GHNGSGKS) and 168–179 (CLLLDEPTSALD).

The protein belongs to the ABC transporter superfamily. Iron (Fe3+)-hydroxamate importer (TC 3.A.1.14.7) family. As to quaternary structure, the complex is composed of two ATP-binding proteins (FhuC), a transmembrane protein (FhuB) and a solute-binding protein (FhuD). FhuC interacts with FhuB.

It localises to the cell inner membrane. The catalysed reaction is ATP + H2O + Fe(3+)-hydroxamate complex-[hydroxamate-binding protein]Side 1 = ADP + phosphate + Fe(3+)-hydroxamate complexSide 2 + [hydroxamate-binding protein]Side 1.. With respect to regulation, ATPase activity is inhibited by vanadate. Functionally, part of the ABC transporter complex FhuCDB involved in iron(3+)-hydroxamate import. Responsible for energy coupling to the transport system. The protein is Iron(3+)-hydroxamate import ATP-binding protein FhuC (fhuC) of Escherichia coli (strain K12).